A 415-amino-acid polypeptide reads, in one-letter code: Mulatexin (415 aa).

The N-terminal stretch at 1–21 (MKFRTLLIIFSLVFLLEIVSA) is a signal peptide. In terms of domain architecture, Chitin-binding type-1 1 spans 23–66 (EPQCGRDAGGALCHGNLCCSHWGFCGTTAIYCDVDQGCQSQCWS). 4 disulfide bridges follow: Cys-26-Cys-41, Cys-35-Cys-47, Cys-40-Cys-54, and Cys-60-Cys-64. Residues 65-127 (WSSPPPPSPP…PGGPERPDHR (63 aa)) form a disordered region. Pro residues predominate over residues 67 to 121 (SPPPPSPPPPPPSPPPPSPPPPSPPPPSPPPPSPPPPSPPPPSPPPPSPPPPGGP). Positions 125-167 (DHRCGRALGNPPCNPGRCCSIHNWCGSTAAYCRGSSCQYQCWN) constitute a Chitin-binding type-1 2 domain. 4 disulfide bridges follow: Cys-128/Cys-143, Cys-137/Cys-149, Cys-142/Cys-156, and Cys-161/Cys-165. Asn-264 is a glycosylation site (N-linked (GlcNAc...) asparagine).

Glycosylated.

The protein resides in the secreted. Functionally, chitin-binding protein which slows larval growth when consumed by the lepidopteran species S.ricini and M.brassica, but not when consumed by the mulberry specialist B.mori. Lacks chitinase activity. This chain is Mulatexin, found in Morus alba (White mulberry).